A 208-amino-acid chain; its full sequence is uncharacterized protein (208 aa).

2 disordered regions span residues 1–78 and 154–208; these read MDLF…SPTE and RRRS…PRNY. Basic residues predominate over residues 40–51; it reads KNHKKAQPRRTT. Residues 179–197 show a composition bias toward polar residues; it reads ANSSSPNPTATGSETSYGS.

This is an uncharacterized protein from Caenorhabditis elegans.